The primary structure comprises 430 residues: Serine--tRNA ligase (430 aa).

Residue 237–239 (TAE) coordinates L-serine. Residue 268-270 (RSE) participates in ATP binding. Residue Glu291 coordinates L-serine. ATP is bound at residue 355-358 (EISS). Ser391 lines the L-serine pocket.

The protein belongs to the class-II aminoacyl-tRNA synthetase family. Type-1 seryl-tRNA synthetase subfamily. Homodimer. The tRNA molecule binds across the dimer.

It is found in the cytoplasm. The enzyme catalyses tRNA(Ser) + L-serine + ATP = L-seryl-tRNA(Ser) + AMP + diphosphate + H(+). The catalysed reaction is tRNA(Sec) + L-serine + ATP = L-seryl-tRNA(Sec) + AMP + diphosphate + H(+). Its pathway is aminoacyl-tRNA biosynthesis; selenocysteinyl-tRNA(Sec) biosynthesis; L-seryl-tRNA(Sec) from L-serine and tRNA(Sec): step 1/1. In terms of biological role, catalyzes the attachment of serine to tRNA(Ser). Is also able to aminoacylate tRNA(Sec) with serine, to form the misacylated tRNA L-seryl-tRNA(Sec), which will be further converted into selenocysteinyl-tRNA(Sec). The protein is Serine--tRNA ligase of Klebsiella pneumoniae subsp. pneumoniae (strain ATCC 700721 / MGH 78578).